The sequence spans 357 residues: A-type ATP synthase subunit C (357 aa).

The protein belongs to the V-ATPase V0D/AC39 subunit family. As to quaternary structure, has multiple subunits with at least A(3), B(3), C, D, E, F, H, I and proteolipid K(x).

The protein resides in the cell membrane. Component of the A-type ATP synthase that produces ATP from ADP in the presence of a proton gradient across the membrane. This Methanococcoides burtonii (strain DSM 6242 / NBRC 107633 / OCM 468 / ACE-M) protein is A-type ATP synthase subunit C.